The following is a 211-amino-acid chain: Dibenzothiophene metabolism operon protein DoxH (211 aa).

Its pathway is aromatic compound metabolism; naphthalene degradation. Functionally, may be involved in the conversion of 2-hydroxy-4-(2'-oxo-3,5-cyclohexadienyl)-buta-2,4-dienoate to cis-O-hydroxybenzylidenepyruvate. DoxH and doxJ encode different enzymes that may have interchangeable functions. In Pseudomonas sp. (strain C18), this protein is Dibenzothiophene metabolism operon protein DoxH (doxH).